Consider the following 326-residue polypeptide: GATA zinc finger domain-containing protein 21 (326 aa).

Disordered stretches follow at residues 1 to 102 and 145 to 238; these read MFRN…NNNN and QNQS…TPER. Composition is skewed to low complexity over residues 17-102 and 148-164; these read NTNL…NNNN and SSSS…GSSA. Polar residues predominate over residues 165–189; that stretch reads LNSINNNNYSPTTSSLNRVRNQYNQ. Acidic residues predominate over residues 193–218; that stretch reads DEEDDDYDNGAEDGFDYDGDDNEDGS. The segment at 239 to 266 adopts a GATA-type zinc-finger fold; that stretch reads CSNCKITHSSYWRRITVNGQKLDFCNAC. The disordered stretch occupies residues 277 to 326; that stretch reads IKESKQRHSIQNIMNQNQEEEEEEREEEEEEEEEEDEEFETLEEEEEDDE. The span at 294–326 shows a compositional bias: acidic residues; it reads QEEEEEEREEEEEEEEEEDEEFETLEEEEEDDE.

This is GATA zinc finger domain-containing protein 21 (gtaU) from Dictyostelium discoideum (Social amoeba).